A 235-amino-acid chain; its full sequence is Transcriptional regulatory protein CseB (235 aa).

Residues 6–119 enclose the Response regulatory domain; that stretch reads HVLFVEDDDV…VLVARIRAVL (114 aa). Residue Asp-55 is modified to 4-aspartylphosphate. Positions 141–235 form a DNA-binding region, ompR/PhoB-type; it reads GGVLTFGELE…VRGFGYKLKA (95 aa).

In terms of processing, phosphorylated by CseC.

It is found in the cytoplasm. Its function is as follows. Member of the two-component regulatory system CseB/CseC involved in the stability of the cell envelope. CseB activates transcription of RNA polymerase sigma-E factor, in response to changes in the cell envelope. This Streptomyces avermitilis (strain ATCC 31267 / DSM 46492 / JCM 5070 / NBRC 14893 / NCIMB 12804 / NRRL 8165 / MA-4680) protein is Transcriptional regulatory protein CseB (cseB).